The following is a 593-amino-acid chain: 2-succinyl-5-enolpyruvyl-6-hydroxy-3-cyclohexene-1-carboxylate synthase (593 aa).

Belongs to the TPP enzyme family. MenD subfamily. In terms of assembly, homodimer. Mg(2+) is required as a cofactor. Requires Mn(2+) as cofactor. The cofactor is thiamine diphosphate.

The catalysed reaction is isochorismate + 2-oxoglutarate + H(+) = 5-enolpyruvoyl-6-hydroxy-2-succinyl-cyclohex-3-ene-1-carboxylate + CO2. The protein operates within quinol/quinone metabolism; 1,4-dihydroxy-2-naphthoate biosynthesis; 1,4-dihydroxy-2-naphthoate from chorismate: step 2/7. It functions in the pathway quinol/quinone metabolism; menaquinone biosynthesis. In terms of biological role, catalyzes the thiamine diphosphate-dependent decarboxylation of 2-oxoglutarate and the subsequent addition of the resulting succinic semialdehyde-thiamine pyrophosphate anion to isochorismate to yield 2-succinyl-5-enolpyruvyl-6-hydroxy-3-cyclohexene-1-carboxylate (SEPHCHC). This Pelodictyon phaeoclathratiforme (strain DSM 5477 / BU-1) protein is 2-succinyl-5-enolpyruvyl-6-hydroxy-3-cyclohexene-1-carboxylate synthase.